Reading from the N-terminus, the 348-residue chain is Protein RecA (348 aa).

67-74 (GPESSGKT) is an ATP binding site.

This sequence belongs to the RecA family.

Its subcellular location is the cytoplasm. In terms of biological role, can catalyze the hydrolysis of ATP in the presence of single-stranded DNA, the ATP-dependent uptake of single-stranded DNA by duplex DNA, and the ATP-dependent hybridization of homologous single-stranded DNAs. It interacts with LexA causing its activation and leading to its autocatalytic cleavage. In Cutibacterium acnes (Propionibacterium acnes), this protein is Protein RecA.